Here is a 954-residue protein sequence, read N- to C-terminus: Serine/threonine-protein kinase ste20 (954 aa).

The segment covering 1-17 (MDGQLSLLSPTSSSSTS) has biased composition (low complexity). Disordered stretches follow at residues 1-165 (MDGQ…YDPL) and 203-316 (AAPA…RKKS). Residues 18–28 (HSRKRLTKKQR) show a composition bias toward basic residues. Composition is skewed to polar residues over residues 33-42 (NHRTSSSFNV), 57-75 (SASS…SLAR), and 100-121 (RSHT…TIPT). 3 stretches are compositionally biased toward low complexity: residues 127–136 (SPASSSQPQT), 143–153 (SAVASTTVTSS), and 203–214 (AAPAPTSTTTIA). Residues 224 to 234 (VAPPPPPPPPA) show a composition bias toward pro residues. 2 stretches are compositionally biased toward low complexity: residues 245-256 (ARSSKPSKSPKS) and 265-277 (ASSF…FSSA). One can recognise a CRIB domain in the interval 334–347 (ISAPENPVHVTHVG). 2 disordered regions span residues 440 to 562 (PMIS…VQAS) and 587 to 655 (QAMA…SNAI). Pro residues-rich tracts occupy residues 463-475 (RAPP…PGPL) and 514-527 (MPPP…PYLP). A Protein kinase domain is found at 674-925 (YRGFTKIGQG…AHDLLRHDFM (252 aa)). ATP contacts are provided by residues 680–688 (IGQGASGGV) and Lys703. Asp793 serves as the catalytic Proton acceptor.

This sequence belongs to the protein kinase superfamily. STE Ser/Thr protein kinase family. STE20 subfamily.

The protein resides in the cytoplasm. The protein localises to the nucleus. It catalyses the reaction L-seryl-[protein] + ATP = O-phospho-L-seryl-[protein] + ADP + H(+). It carries out the reaction L-threonyl-[protein] + ATP = O-phospho-L-threonyl-[protein] + ADP + H(+). MAP4K component of the MAPK pathway required for the mating pheromone response and the regulation of cell polarity and cell cycle. Phosphorylates histone H2B to form H2BS10ph. In Neurospora crassa (strain ATCC 24698 / 74-OR23-1A / CBS 708.71 / DSM 1257 / FGSC 987), this protein is Serine/threonine-protein kinase ste20 (stk-4).